We begin with the raw amino-acid sequence, 295 residues long: ATP-dependent (S)-NAD(P)H-hydrate dehydratase (295 aa).

The region spanning 9-289 (LLERARNLVP…DQIHQVFDDL (281 aa)) is the YjeF C-terminal domain. Residues Gly-109 and 162–168 (NAIEFCR) each bind (6S)-NADPHX. Residues 193–197 (KGLND) and 214–223 (GSGRRCGGQG) each bind ATP. Asp-224 serves as a coordination point for (6S)-NADPHX.

Belongs to the NnrD/CARKD family. Mg(2+) serves as cofactor.

It carries out the reaction (6S)-NADHX + ATP = ADP + phosphate + NADH + H(+). The catalysed reaction is (6S)-NADPHX + ATP = ADP + phosphate + NADPH + H(+). Its function is as follows. Catalyzes the dehydration of the S-form of NAD(P)HX at the expense of ATP, which is converted to ADP. Together with NAD(P)HX epimerase, which catalyzes the epimerization of the S- and R-forms, the enzyme allows the repair of both epimers of NAD(P)HX, a damaged form of NAD(P)H that is a result of enzymatic or heat-dependent hydration. This is ATP-dependent (S)-NAD(P)H-hydrate dehydratase from Anopheles darlingi (Mosquito).